A 207-amino-acid polypeptide reads, in one-letter code: Protein phosphatase inhibitor 2 (207 aa).

Disordered regions lie at residues 1–44 (MAAS…SKKS), 65–97 (LMKI…ALTP), and 110–146 (ESLE…EMKR). Ala-2 carries the N-acetylalanine modification. The tract at residues 12-17 (KGILKN) is required for binding PPP1CC. Residues 19–28 (SSTTSSVVST) show a composition bias toward low complexity. The span at 35 to 44 (SVDEELSKKS) shows a compositional bias: basic and acidic residues. Residues 43-55 (KSQKWDEMSILAT) are required for binding PPP1CC. Ser-44 is modified (phosphoserine; by ATM). Residue Thr-73 is modified to Phosphothreonine; by GSK3. Over residues 80-91 (ADDEDALSDSET) the composition is skewed to acidic residues. Residues Ser-87 and Ser-89 each carry the phosphoserine modification. Residues Thr-92 and Thr-96 each carry the phosphothreonine modification. The segment covering 112–122 (LEPKYRVREQE) has biased composition (basic and acidic residues). Residues Ser-123, Ser-124, Ser-129, and Ser-132 each carry the phosphoserine modification. Acidic residues predominate over residues 123-132 (SSGDEDSDLS). Over residues 133–145 (PEEREKKRQFEMK) the composition is skewed to basic and acidic residues. The tract at residues 149-152 (HYNE) is required for binding PPP1CC catalytic center, displacing metal ions and inhibition of PPP1CC catalytic activity. The segment at 165-207 (KDLNDEEEDEEMSETAAGESMNMEESSQGSATSDQLQNKSQSS) is disordered. Acidic residues predominate over residues 168 to 177 (NDEEEDEEMS). Positions 187–207 (MEESSQGSATSDQLQNKSQSS) are enriched in polar residues.

It belongs to the protein phosphatase inhibitor 2 family. In terms of assembly, heterodimer with PP1. Post-translationally, phosphorylation on Ser-44 by ATM activates PP1 by dissociating the PP1-PPP1R2 complex. Phosphorylation on Thr-73 by GSK3 activates PP1 by dissociating the PP1-PPP1R2 complex.

Inhibitor of protein-phosphatase 1. The protein is Protein phosphatase inhibitor 2 (PPP1R2) of Bos taurus (Bovine).